The sequence spans 298 residues: TLR adapter interacting with SLC15A4 on the lysosome (298 aa).

The pLxIS motif signature appears at 287–291 (SLHIS). Ser291 is subject to Phosphoserine.

In terms of assembly, interacts (via pLxIS motif) with IRF5; leading to IRF5 activation. Interacts with SLC15A4; leading to its recruitment to endolysosome. Post-translationally, the phosphorylated pLxIS motif constitutes an IRF5-binding motif, leading to recruitment of the transcription factor IRF5 to induce type-I interferons and other cytokines.

The protein resides in the lysosome membrane. It is found in the endosome membrane. Its subcellular location is the nucleus. It localises to the cytoplasm. Innate immune adapter that mediates the recruitment and activation of IRF5 downstream of endolysosomal toll-like receptors TLR7, TLR8 and TLR9. Following recruitment to endolysosome by SLC15A4 downstream of TLR7, TLR8 and TLR9, specifically recruits IRF5 transcription factor via its pLxIS motif, leading to IRF5 activation and subsequent expression of type I interferons. Plays a role in the regulation of endolysosomal pH in immune cells such as B-cells, dendritic cells and monocytes. The chain is TLR adapter interacting with SLC15A4 on the lysosome from Mus musculus (Mouse).